The following is a 149-amino-acid chain: SsrA-binding protein (149 aa).

Belongs to the SmpB family.

The protein resides in the cytoplasm. Its function is as follows. Required for rescue of stalled ribosomes mediated by trans-translation. Binds to transfer-messenger RNA (tmRNA), required for stable association of tmRNA with ribosomes. tmRNA and SmpB together mimic tRNA shape, replacing the anticodon stem-loop with SmpB. tmRNA is encoded by the ssrA gene; the 2 termini fold to resemble tRNA(Ala) and it encodes a 'tag peptide', a short internal open reading frame. During trans-translation Ala-aminoacylated tmRNA acts like a tRNA, entering the A-site of stalled ribosomes, displacing the stalled mRNA. The ribosome then switches to translate the ORF on the tmRNA; the nascent peptide is terminated with the 'tag peptide' encoded by the tmRNA and targeted for degradation. The ribosome is freed to recommence translation, which seems to be the essential function of trans-translation. This Anaplasma marginale (strain St. Maries) protein is SsrA-binding protein.